The sequence spans 323 residues: Prostaglandin-E(2) 9-reductase (323 aa).

NADP(+)-binding positions include 23–24 and aspartate 50; that span reads TY. Tyrosine 24 is a binding site for substrate. Tyrosine 55 acts as the Proton donor in catalysis. Histidine 117 is a binding site for substrate. NADP(+) is bound by residues 166–167, glutamine 190, 216–221, and 270–280; these read SN, YSALGS, and KSFTEKRIKEN.

The protein belongs to the aldo/keto reductase family.

It is found in the cytoplasm. It catalyses the reaction prostaglandin F2alpha + NADP(+) = prostaglandin E2 + NADPH + H(+). The catalysed reaction is (17R,20S)-17,20-dihydroxypregn-4-en-3-one + NADP(+) = 17alpha-hydroxyprogesterone + NADPH + H(+). The enzyme catalyses (17R,20S)-17,20-dihydroxypregn-4-en-3-one + NAD(+) = 17alpha-hydroxyprogesterone + NADH + H(+). Can convert prostaglandin E2 to prostaglandin F2-alpha. The sequence is that of Prostaglandin-E(2) 9-reductase (AKR1C5) from Oryctolagus cuniculus (Rabbit).